A 235-amino-acid chain; its full sequence is Large ribosomal subunit protein bL25 (235 aa).

Disordered stretches follow at residues 1 to 21 and 210 to 235; these read MADNIINAQRREEKGKGPARR and APAAGAAPAAGGEAAKKAPEAKGAKK. Residues 210–222 are compositionally biased toward low complexity; it reads APAAGAAPAAGGE. Residues 223-235 are compositionally biased toward basic and acidic residues; the sequence is AAKKAPEAKGAKK.

Belongs to the bacterial ribosomal protein bL25 family. CTC subfamily. In terms of assembly, part of the 50S ribosomal subunit; part of the 5S rRNA/L5/L18/L25 subcomplex. Contacts the 5S rRNA. Binds to the 5S rRNA independently of L5 and L18.

In terms of biological role, this is one of the proteins that binds to the 5S RNA in the ribosome where it forms part of the central protuberance. This chain is Large ribosomal subunit protein bL25, found in Anaeromyxobacter sp. (strain Fw109-5).